We begin with the raw amino-acid sequence, 1110 residues long: Isoleucine--tRNA ligase (1110 aa).

Residues 47–57 (PSANGTPGIHH) carry the 'HIGH' region motif. The 'KMSKS' region signature appears at 658–662 (KMSKR). Lys-661 serves as a coordination point for ATP.

It belongs to the class-I aminoacyl-tRNA synthetase family. IleS type 2 subfamily. As to quaternary structure, monomer. Requires Zn(2+) as cofactor.

It is found in the cytoplasm. It carries out the reaction tRNA(Ile) + L-isoleucine + ATP = L-isoleucyl-tRNA(Ile) + AMP + diphosphate. In terms of biological role, catalyzes the attachment of isoleucine to tRNA(Ile). As IleRS can inadvertently accommodate and process structurally similar amino acids such as valine, to avoid such errors it has two additional distinct tRNA(Ile)-dependent editing activities. One activity is designated as 'pretransfer' editing and involves the hydrolysis of activated Val-AMP. The other activity is designated 'posttransfer' editing and involves deacylation of mischarged Val-tRNA(Ile). This is Isoleucine--tRNA ligase from Cytophaga hutchinsonii (strain ATCC 33406 / DSM 1761 / CIP 103989 / NBRC 15051 / NCIMB 9469 / D465).